A 392-amino-acid polypeptide reads, in one-letter code: Cellobiose 2-epimerase (392 aa).

This sequence belongs to the cellobiose 2-epimerase family.

It carries out the reaction D-cellobiose = beta-D-glucosyl-(1-&gt;4)-D-mannopyranose. Its function is as follows. Catalyzes the reversible epimerization of cellobiose to 4-O-beta-D-glucopyranosyl-D-mannose (Glc-Man). Can also epimerize cellotriose to Glc-Glc-Man, cellotetraose to Glc-Glc-Glc-Man, lactose to epilactose, and mannobiose to 4-O-beta-D-mannopyranosyl-D-glucopyranose (Man-Glc). May function as a mannobiose 2-epimerase in vivo and be involved in a mannan catabolic pathway which feeds into glycolysis. This is Cellobiose 2-epimerase (bfce) from Bacteroides fragilis (strain ATCC 25285 / DSM 2151 / CCUG 4856 / JCM 11019 / LMG 10263 / NCTC 9343 / Onslow / VPI 2553 / EN-2).